Here is a 287-residue protein sequence, read N- to C-terminus: Phosphatidylserine decarboxylase proenzyme (287 aa).

Active-site charge relay system; for autoendoproteolytic cleavage activity residues include Asp-89, His-146, and Ser-252. The Schiff-base intermediate with substrate; via pyruvic acid; for decarboxylase activity role is filled by Ser-252. Pyruvic acid (Ser); by autocatalysis is present on Ser-252.

This sequence belongs to the phosphatidylserine decarboxylase family. PSD-B subfamily. Prokaryotic type I sub-subfamily. Heterodimer of a large membrane-associated beta subunit and a small pyruvoyl-containing alpha subunit. Pyruvate is required as a cofactor. In terms of processing, is synthesized initially as an inactive proenzyme. Formation of the active enzyme involves a self-maturation process in which the active site pyruvoyl group is generated from an internal serine residue via an autocatalytic post-translational modification. Two non-identical subunits are generated from the proenzyme in this reaction, and the pyruvate is formed at the N-terminus of the alpha chain, which is derived from the carboxyl end of the proenzyme. The autoendoproteolytic cleavage occurs by a canonical serine protease mechanism, in which the side chain hydroxyl group of the serine supplies its oxygen atom to form the C-terminus of the beta chain, while the remainder of the serine residue undergoes an oxidative deamination to produce ammonia and the pyruvoyl prosthetic group on the alpha chain. During this reaction, the Ser that is part of the protease active site of the proenzyme becomes the pyruvoyl prosthetic group, which constitutes an essential element of the active site of the mature decarboxylase.

It is found in the cell membrane. It carries out the reaction a 1,2-diacyl-sn-glycero-3-phospho-L-serine + H(+) = a 1,2-diacyl-sn-glycero-3-phosphoethanolamine + CO2. Its pathway is phospholipid metabolism; phosphatidylethanolamine biosynthesis; phosphatidylethanolamine from CDP-diacylglycerol: step 2/2. Catalyzes the formation of phosphatidylethanolamine (PtdEtn) from phosphatidylserine (PtdSer). The chain is Phosphatidylserine decarboxylase proenzyme from Shewanella sediminis (strain HAW-EB3).